The sequence spans 200 residues: NADH-quinone oxidoreductase subunit B 2 (200 aa).

[4Fe-4S] cluster-binding residues include C79, C80, C144, and C174.

The protein belongs to the complex I 20 kDa subunit family. In terms of assembly, NDH-1 is composed of 14 different subunits. Subunits NuoB, C, D, E, F, and G constitute the peripheral sector of the complex. The cofactor is [4Fe-4S] cluster.

The protein resides in the cell inner membrane. The enzyme catalyses a quinone + NADH + 5 H(+)(in) = a quinol + NAD(+) + 4 H(+)(out). NDH-1 shuttles electrons from NADH, via FMN and iron-sulfur (Fe-S) centers, to quinones in the respiratory chain. The immediate electron acceptor for the enzyme in this species is believed to be ubiquinone. Couples the redox reaction to proton translocation (for every two electrons transferred, four hydrogen ions are translocated across the cytoplasmic membrane), and thus conserves the redox energy in a proton gradient. This is NADH-quinone oxidoreductase subunit B 2 from Rhodopseudomonas palustris (strain BisA53).